Reading from the N-terminus, the 457-residue chain is Multidrug resistance protein MdtK (457 aa).

At 1–10 (MQKYISEARL) the chain is on the cytoplasmic side. Residues 11–31 (LLALAIPVILAQIAQTAMGFV) form a helical membrane-spanning segment. Topologically, residues 32–52 (DTVMAGGYSATDMAAVAIGTS) are periplasmic. A helical transmembrane segment spans residues 53–73 (IWLPAILFGHGLLLALTPVIA). Over 74 to 92 (QLNGSGRRERIAHQVRQGF) the chain is Cytoplasmic. The helical transmembrane segment at 93–113 (WLAGFVSVLIMLVLWNAGYII) threads the bilayer. At 114–126 (RYMENIDPALADK) the chain is on the periplasmic side. The helical transmembrane segment at 127 to 147 (AVGYLRALLWGAPGYLFFQVA) threads the bilayer. Residues 148–159 (RNQCEGLAKAKP) are Cytoplasmic-facing. A helical membrane pass occupies residues 160-180 (GMVMGFIGLLVNIPVNYIFIY). The Periplasmic segment spans residues 181 to 188 (GHFGMPEL). The helical transmembrane segment at 189 to 209 (GGVGCGVATAAVYWVMFLAMV) threads the bilayer. Residues 210-242 (SYIKRARSMRDIRNEKGTAKPEPAVMKRLIQLG) are Cytoplasmic-facing. Residues 243–263 (LPIALALFLEVTLFAVVALLV) traverse the membrane as a helical segment. Residues 264–275 (SPLGIVDVAGHQ) are Periplasmic-facing. A helical membrane pass occupies residues 276–296 (IALNFSSLMFVLPMSLAAAVT). Residues 297–313 (IRVGYRLGQGSTLDAQT) are Cytoplasmic-facing. Residues 314 to 334 (AARTGLMVGVCMATLTAIFTV) form a helical membrane-spanning segment. Residues 335–349 (SLREQIALLYNDNPE) lie on the Periplasmic side of the membrane. A helical membrane pass occupies residues 350–370 (VVTLAAHLMLLAAVYQISDSI). Residues 371-386 (QVIGSGILRGYKDTRS) lie on the Cytoplasmic side of the membrane. A helical transmembrane segment spans residues 387-407 (IFYITFTAYWVLGLPSGYILA). At 408-417 (LTDLVVEPMG) the chain is on the periplasmic side. Residues 418 to 438 (PAGFWIGFIIGLTSAAIMMML) traverse the membrane as a helical segment. Topologically, residues 439–457 (RMRFLQRMPSAIILQRASR) are cytoplasmic.

Belongs to the multi antimicrobial extrusion (MATE) (TC 2.A.66.1) family. MdtK subfamily.

The protein localises to the cell inner membrane. In terms of biological role, multidrug efflux pump that functions probably as a Na(+)/drug antiporter. This chain is Multidrug resistance protein MdtK, found in Shigella flexneri serotype 5b (strain 8401).